Here is a 201-residue protein sequence, read N- to C-terminus: Cerebellin-4 (201 aa).

A signal peptide spans 1–27 (MGSGRRALSAVPAVLLVLTLPGLPVWA). N-linked (GlcNAc...) asparagine glycosylation is found at asparagine 29 and asparagine 88. In terms of domain architecture, C1q spans 66 to 201 (AANSKVAFSA…TFSGFLVFPL (136 aa)).

As to quaternary structure, homohexamer; disulfide-linked homotrimers. The trimers are assembled via the globular C1q domains. The trimers associate via N-terminal cysteine residues to form disulfide-linked hexamers. May form oligomers with CBLN1, CBLN2 and CBLN3 prior to secretion. Strongly interacts with DCC in a NTN1-displaceable fashion. Weakly binds to NRXN1 and NRXN2 long and short isoforms produced by alternative promoter usage. Interaction with NRXN3 short isoform is hardly detectable; no interaction at all with NRXN3 long isoform. Post-translationally, sialoglycoprotein.

It is found in the secreted. The protein resides in the synapse. Acts as a synaptic organizer in specific subsets of neurons in the brain. Essential for the formation and maintenance of inhibitory GABAergic synapses. Promotes the development of dendrite-targeting inhibitory GABAergic synapses made by somatostatin-positive interneurons. May contribute to the function of ventral medial habenula region of the brain implicated in the regulation of anxiety-related behaviors. May play a role in CBLN3 export from the endoplasmic reticulum and secretion. In Homo sapiens (Human), this protein is Cerebellin-4 (CBLN4).